The chain runs to 332 residues: MAASLRRPSFTTCSSPTDTDDEGVRGTCEDASICKRFAVSIGYWQDPYIQHLVRLSKERKAPEINRGYFARVHGVSQLTKAFLRKTECNCQILNLGAGMDTTFWMLKDEDLLPRKYFEIDFPMIVTRKLHSIKLKPLLSKPILDLHSEDTLQMDGHMLDSTRYAIIGADLRDIADLEEKLKKCNMSTQLPTLLIAECVLVYMTPEQSANLLKWAANSFEAAMFINYEQVNMGDRFGQIMIENLRRRQCDLAGVETCKSLESQRERLLSSGWESASAIDMMEVYSRLPRAEVIRIEALEFLDEMELLEQLMQHYCLCWATKGGSELGLKEITY.

Positions 1-23 (MAASLRRPSFTTCSSPTDTDDEG) are disordered. S-adenosyl-L-methionine contacts are provided by residues Arg-71, Gly-96, Asp-120, 169 to 170 (DL), and Glu-196.

This sequence belongs to the methyltransferase superfamily. LCMT family.

The enzyme catalyses [phosphatase 2A protein]-C-terminal L-leucine + S-adenosyl-L-methionine = [phosphatase 2A protein]-C-terminal L-leucine methyl ester + S-adenosyl-L-homocysteine. Functionally, methylates the carboxyl group of the C-terminal leucine residue of protein phosphatase 2A catalytic subunits to form alpha-leucine ester residues. This chain is Leucine carboxyl methyltransferase 1 (LCMT1), found in Bos taurus (Bovine).